The primary structure comprises 92 residues: Putative pterin-4-alpha-carbinolamine dehydratase (92 aa).

The protein belongs to the pterin-4-alpha-carbinolamine dehydratase family.

The enzyme catalyses (4aS,6R)-4a-hydroxy-L-erythro-5,6,7,8-tetrahydrobiopterin = (6R)-L-erythro-6,7-dihydrobiopterin + H2O. This Cereibacter sphaeroides (strain ATCC 17023 / DSM 158 / JCM 6121 / CCUG 31486 / LMG 2827 / NBRC 12203 / NCIMB 8253 / ATH 2.4.1.) (Rhodobacter sphaeroides) protein is Putative pterin-4-alpha-carbinolamine dehydratase.